Consider the following 134-residue polypeptide: Lymphocyte antigen 6F (134 aa).

A signal peptide spans 1 to 26 (MDSCHTTKSCVLILLVVLLCAERAQG). The 93-residue stretch at 27 to 119 (LECYNCLGVS…TGGSTWTMTR (93 aa)) folds into the UPAR/Ly6 domain. Cystine bridges form between cysteine 29–cysteine 53, cysteine 32–cysteine 41, cysteine 46–cysteine 74, cysteine 78–cysteine 98, and cysteine 99–cysteine 104. Glycine 112 carries the GPI-anchor amidated glycine lipid modification. A propeptide spans 113-134 (STWTMTRVLLLNLGSVFLQTLL) (removed in mature form).

It localises to the cell membrane. The sequence is that of Lymphocyte antigen 6F (Ly6f) from Mus musculus (Mouse).